The following is a 346-amino-acid chain: Probable RNA methyltransferase Pmen_2155 (346 aa).

Catalysis depends on E91, which acts as the Proton acceptor. Residues 94–320 (LLPRDGLCIS…TKVRNSAGQD (227 aa)) enclose the Radical SAM core domain. The cysteines at positions 101 and 325 are disulfide-linked. 3 residues coordinate [4Fe-4S] cluster: C108, C112, and C115. Residues 153 to 154 (GE), S183, 206 to 208 (SLH), and N282 contribute to the S-adenosyl-L-methionine site. Catalysis depends on C325, which acts as the S-methylcysteine intermediate.

This sequence belongs to the radical SAM superfamily. RlmN family. It depends on [4Fe-4S] cluster as a cofactor.

Its subcellular location is the cytoplasm. This Ectopseudomonas mendocina (strain ymp) (Pseudomonas mendocina) protein is Probable RNA methyltransferase Pmen_2155.